The primary structure comprises 464 residues: Fumarate hydratase class II (464 aa).

Residues 96 to 98 (SGT), 127 to 130 (HPND), 137 to 139 (SSN), and threonine 185 each bind substrate. Histidine 186 functions as the Proton donor/acceptor in the catalytic mechanism. Serine 316 is a catalytic residue. Residues serine 317 and 322–324 (KVN) each bind substrate.

Belongs to the class-II fumarase/aspartase family. Fumarase subfamily. As to quaternary structure, homotetramer.

The protein localises to the cytoplasm. The enzyme catalyses (S)-malate = fumarate + H2O. It functions in the pathway carbohydrate metabolism; tricarboxylic acid cycle; (S)-malate from fumarate: step 1/1. Its function is as follows. Involved in the TCA cycle. Catalyzes the stereospecific interconversion of fumarate to L-malate. This chain is Fumarate hydratase class II, found in Pseudomonas syringae pv. tomato (strain ATCC BAA-871 / DC3000).